Reading from the N-terminus, the 1037-residue chain is Ephrin type-A receptor 5 (1037 aa).

Residues 1 to 24 (MRGSGPRGAGRRRPPSGGGDTPIT) form the signal peptide. Positions 1-24 (MRGSGPRGAGRRRPPSGGGDTPIT) are disordered. At 25-573 (PASLAGCYSA…AASSDQSQIP (549 aa)) the chain is on the extracellular side. In terms of domain architecture, Eph LBD spans 60–238 (EVNLLDSRTV…YYKKCPSVVR (179 aa)). N-linked (GlcNAc...) asparagine glycans are attached at residues Asn264, Asn299, Asn369, Asn423, Asn436, and Asn461. Fibronectin type-III domains are found at residues 357–467 (PPSA…TNQA) and 468–562 (APSP…TTPV). The helical transmembrane segment at 574 to 594 (VIAVSVTVGVILLAVVIGVLL) threads the bilayer. The Cytoplasmic segment spans residues 595–1037 (SGSCCECGCG…VQLVNGMVPL (443 aa)). Phosphotyrosine; by autocatalysis occurs at positions 650 and 656. A Protein kinase domain is found at 675-936 (ITIERVIGAG…EIVNMLDKLI (262 aa)). ATP-binding positions include 681-689 (IGAGEFGEV) and Lys707. Asp800 (proton acceptor) is an active-site residue. 2 positions are modified to phosphotyrosine; by autocatalysis: Tyr833 and Tyr982. One can recognise an SAM domain in the interval 965-1029 (GAYRSVGEWL…MNSLQEMKVQ (65 aa)). A PDZ-binding motif is present at residues 1035–1037 (VPL).

Belongs to the protein kinase superfamily. Tyr protein kinase family. Ephrin receptor subfamily. As to quaternary structure, heterotetramer upon binding of the ligand. The heterotetramer is composed of an ephrin dimer and a receptor dimer. Oligomerization is probably required to induce biological responses. Interacts (via SAM domain) with SAMD5 (via SAM domain). Post-translationally, phosphorylated. Phosphorylation is stimulated by the ligand EFNA5. Dephosphorylation upon stimulation by glucose, inhibits EPHA5 forward signaling and results in insulin secretion. Almost exclusively expressed in the nervous system in cortical neurons, cerebellar Purkinje cells and pyramidal neurons within the cortex and hippocampus. Display an increasing gradient of expression from the forebrain to hindbrain and spinal cord.

The protein resides in the cell membrane. It localises to the cell projection. It is found in the axon. Its subcellular location is the dendrite. It carries out the reaction L-tyrosyl-[protein] + ATP = O-phospho-L-tyrosyl-[protein] + ADP + H(+). Receptor tyrosine kinase which binds promiscuously GPI-anchored ephrin-A family ligands residing on adjacent cells, leading to contact-dependent bidirectional signaling into neighboring cells. The signaling pathway downstream of the receptor is referred to as forward signaling while the signaling pathway downstream of the ephrin ligand is referred to as reverse signaling. Among GPI-anchored ephrin-A ligands, EFNA5 most probably constitutes the cognate/functional ligand for EPHA5. Functions as an axon guidance molecule during development and may be involved in the development of the retinotectal, entorhino-hippocampal and hippocamposeptal pathways. Together with EFNA5 plays also a role in synaptic plasticity in adult brain through regulation of synaptogenesis. In addition to its function in the nervous system, the interaction of EPHA5 with EFNA5 mediates communication between pancreatic islet cells to regulate glucose-stimulated insulin secretion. The polypeptide is Ephrin type-A receptor 5 (EPHA5) (Homo sapiens (Human)).